A 123-amino-acid polypeptide reads, in one-letter code: Small ribosomal subunit protein uS12cz/uS12cy (123 aa).

This sequence belongs to the universal ribosomal protein uS12 family. As to quaternary structure, part of the 30S ribosomal subunit.

Its subcellular location is the plastid. The protein resides in the chloroplast. Its function is as follows. With S4 and S5 plays an important role in translational accuracy. Located at the interface of the 30S and 50S subunits. This Eucalyptus globulus subsp. globulus (Tasmanian blue gum) protein is Small ribosomal subunit protein uS12cz/uS12cy (rps12-A).